Reading from the N-terminus, the 123-residue chain is Large ribosomal subunit protein uL29x (123 aa).

Belongs to the universal ribosomal protein uL29 family.

The protein is Large ribosomal subunit protein uL29x (RPL35C) of Arabidopsis thaliana (Mouse-ear cress).